An 86-amino-acid polypeptide reads, in one-letter code: Large ribosomal subunit protein uL23 (86 aa).

This sequence belongs to the universal ribosomal protein uL23 family. In terms of assembly, part of the 50S ribosomal subunit. Contacts protein L29.

Functionally, binds to 23S rRNA. One of the proteins that surrounds the polypeptide exit tunnel on the outside of the ribosome. The polypeptide is Large ribosomal subunit protein uL23 (Thermococcus kodakarensis (strain ATCC BAA-918 / JCM 12380 / KOD1) (Pyrococcus kodakaraensis (strain KOD1))).